The primary structure comprises 443 residues: Chromosomal replication initiator protein DnaA (443 aa).

Positions 1-76 (METKALWEKL…KSVLNSYVSV (76 aa)) are domain I, interacts with DnaA modulators. Residues 76 to 99 (VDFLTKEIFEKNTKKENKKEPINT) form a domain II region. The segment at 100–320 (VLSENALTFE…GLVNRLLFFG (221 aa)) is domain III, AAA+ region. Glycine 145, glycine 147, lysine 148, and threonine 149 together coordinate ATP. The tract at residues 321-443 (IQNDLGHIID…ESLKNEIIGK (123 aa)) is domain IV, binds dsDNA.

Belongs to the DnaA family. In terms of assembly, oligomerizes as a right-handed, spiral filament on DNA at oriC.

It localises to the cytoplasm. Its function is as follows. Plays an essential role in the initiation and regulation of chromosomal replication. ATP-DnaA binds to the origin of replication (oriC) to initiate formation of the DNA replication initiation complex once per cell cycle. Binds the DnaA box (a 9 base pair repeat at the origin) and separates the double-stranded (ds)DNA. Forms a right-handed helical filament on oriC DNA; dsDNA binds to the exterior of the filament while single-stranded (ss)DNA is stabiized in the filament's interior. The ATP-DnaA-oriC complex binds and stabilizes one strand of the AT-rich DNA unwinding element (DUE), permitting loading of DNA polymerase. After initiation quickly degrades to an ADP-DnaA complex that is not apt for DNA replication. Binds acidic phospholipids. In Mesoplasma florum (strain ATCC 33453 / NBRC 100688 / NCTC 11704 / L1) (Acholeplasma florum), this protein is Chromosomal replication initiator protein DnaA.